A 527-amino-acid chain; its full sequence is Arginine--tRNA ligase (527 aa).

Positions 108–118 (ANPTGPLHIGH) match the 'HIGH' region motif.

This sequence belongs to the class-I aminoacyl-tRNA synthetase family. As to quaternary structure, monomer.

It localises to the cytoplasm. It catalyses the reaction tRNA(Arg) + L-arginine + ATP = L-arginyl-tRNA(Arg) + AMP + diphosphate. This Sulfurimonas denitrificans (strain ATCC 33889 / DSM 1251) (Thiomicrospira denitrificans (strain ATCC 33889 / DSM 1251)) protein is Arginine--tRNA ligase.